We begin with the raw amino-acid sequence, 473 residues long: Crt homolog 1 (473 aa).

At 1 to 49 (MTNNDKEKQPLLSSINNEDDNGATINIVEPVPWYSNIPQKIKNSMSKET) the chain is on the cytoplasmic side. Residues 50–70 (ITILIYVVLYVTSGVINSVLL) form a helical membrane-spanning segment. Residues 71–80 (KKVMNKFTNY) are Vacuolar-facing. Residues 81–101 (AFFLSQLTNFGYVPIFGAVTA) traverse the membrane as a helical segment. The Cytoplasmic portion of the chain corresponds to 102–121 (YKIFFTKDIPQETRDFPTRK). A helical transmembrane segment spans residues 122 to 142 (FAIMGALDAITGFFVVIGGVS). At 143–146 (TSGP) the chain is on the vacuolar side. Residues 147 to 167 (LQQLLNQAIIPFTMIASFIFL) traverse the membrane as a helical segment. The Cytoplasmic portion of the chain corresponds to 168–175 (KERYSLIQ). Residues 176 to 196 (LGGALVIIGGVVTSLIPSLLG) traverse the membrane as a helical segment. At 197–207 (GSSGGNKPFWN) the chain is on the vacuolar side. The chain crosses the membrane as a helical span at residues 208-228 (FFYLLSVIPGALSNVYKDIGF). The Cytoplasmic portion of the chain corresponds to 229–248 (QAVADMDVWYLQYWDSLYQS). Residues 249–269 (IFGLFLFPVNNWLPPPATVKF) traverse the membrane as a helical segment. Over 270–322 (EQILPFMKEGAECLAGINSIIPSYINGTSSFTATSCTYAPDATITCDDCHNAW) the chain is Vacuolar. Residue Asn-295 is glycosylated (N-linked (GlcNAc...) asparagine). A helical membrane pass occupies residues 323 to 343 (IVIILYMTINIIYNIFILLVL). The Cytoplasmic segment spans residues 344–352 (KHAGATVYS). Residues 353–373 (IANTLRLPLTNIVFSIHFIMG) traverse the membrane as a helical segment. Position 374 (Ser-374) is a topological domain, vacuolar. The helical transmembrane segment at 375 to 395 (AVSPFSGLSVAGLVIILVGLG) threads the bilayer. The Cytoplasmic segment spans residues 396-473 (GYRVGSMIKQ…AANNNNYGDA (78 aa)).

This sequence belongs to the CRT-like transporter family.

The protein localises to the vacuole membrane. In terms of biological role, nutrient transporter. Involved in maintaining the osmotic homeostasis of the digestive vacuole. This Dictyostelium discoideum (Social amoeba) protein is Crt homolog 1 (crtp1).